Consider the following 182-residue polypeptide: UPF0254 protein MK0012 (182 aa).

It belongs to the UPF0254 family.

This Methanopyrus kandleri (strain AV19 / DSM 6324 / JCM 9639 / NBRC 100938) protein is UPF0254 protein MK0012.